A 626-amino-acid polypeptide reads, in one-letter code: tRNA uridine 5-carboxymethylaminomethyl modification enzyme MnmG (626 aa).

13–18 (GGGHAG) serves as a coordination point for FAD. NAD(+) is bound at residue 273–287 (GPRYCPSIEDKIHRF).

This sequence belongs to the MnmG family. As to quaternary structure, homodimer. Heterotetramer of two MnmE and two MnmG subunits. It depends on FAD as a cofactor.

Its subcellular location is the cytoplasm. Its function is as follows. NAD-binding protein involved in the addition of a carboxymethylaminomethyl (cmnm) group at the wobble position (U34) of certain tRNAs, forming tRNA-cmnm(5)s(2)U34. The protein is tRNA uridine 5-carboxymethylaminomethyl modification enzyme MnmG of Acinetobacter baumannii (strain ATCC 17978 / DSM 105126 / CIP 53.77 / LMG 1025 / NCDC KC755 / 5377).